Here is a 70-residue protein sequence, read N- to C-terminus: Large ribosomal subunit protein uL29 (70 aa).

It belongs to the universal ribosomal protein uL29 family.

In Clostridium novyi (strain NT), this protein is Large ribosomal subunit protein uL29.